The primary structure comprises 200 residues: Transgelin (200 aa).

At Ala-2 the chain carries N-acetylalanine. The 114-residue stretch at 24-137 (DELEDRLVEW…RTLVALGSLA (114 aa)) folds into the Calponin-homology (CH) domain. The Calponin-like repeat unit spans residues 175–199 (IGLQMGTNKGASQAGMSYGRPRQII).

This sequence belongs to the calponin family. Monomer. Gizzard, uterus, intestine, esophagus, aorta, and trace amounts in brain, liver and heart.

It is found in the cytoplasm. Functionally, actin cross-linking/gelling protein. In Gallus gallus (Chicken), this protein is Transgelin (TAGLN).